A 633-amino-acid polypeptide reads, in one-letter code: Proline-rich receptor-like protein kinase PERK4 (633 aa).

A compositionally biased stretch (low complexity) spans 1 to 29 (MASSPESAPPTNSTSSPSPPSNTNSTTSS). Positions 1–145 (MASSPESAPP…GSSGGGGGGR (145 aa)) are disordered. The Extracellular portion of the chain corresponds to 1-151 (MASSPESAPP…GGGRSNTNTA (151 aa)). N12 and N24 each carry an N-linked (GlcNAc...) asparagine glycan. Pro residues-rich tracts occupy residues 30–41 (PPAPSPPSPTPP) and 48–65 (SPPP…PNPP). N66 carries N-linked (GlcNAc...) asparagine glycosylation. The span at 77 to 90 (QGGGGERGNGGNNG) shows a compositional bias: gly residues. The segment covering 106–135 (SRSNGDNGGSRSSPPGDTGGSRSDNPPSSG) has biased composition (low complexity). Residues 136–145 (GSSGGGGGGR) are compositionally biased toward gly residues. The helical transmembrane segment at 152–172 (IIVGVLVGAGLLMIVLIIVCL) threads the bilayer. Over 173–633 (RRKKKRKDSF…MGTKSPTPPK (461 aa)) the chain is Cytoplasmic. A compositionally biased stretch (low complexity) spans 193-222 (QYYGNNNNNNASQNYPNWHLNSQGQNQQST). Residues 193 to 255 (QYYGNNNNNN…SMYSGPSRPV (63 aa)) are disordered. T273 bears the Phosphothreonine mark. Positions 284–562 (FTDANLLGQG…VRALEGEVSL (279 aa)) constitute a Protein kinase domain. ATP contacts are provided by residues 290–298 (LGQGGFGYV) and K312. Y357 bears the Phosphotyrosine mark. D408 serves as the catalytic Proton acceptor. S441 is modified (phosphoserine). A phosphothreonine mark is found at T442 and T447. Y455 is modified (phosphotyrosine). Residues 608-619 (FPVSDCEGTSSN) show a composition bias toward polar residues. The segment at 608 to 633 (FPVSDCEGTSSNDSRDMGTKSPTPPK) is disordered.

Belongs to the protein kinase superfamily. Ser/Thr protein kinase family. Mostly expressed in inflorescence bolts. Also present in roots, stems, germinated seeds, cotyledons, pollen, stamen and stigma.

It is found in the cell membrane. It catalyses the reaction L-seryl-[protein] + ATP = O-phospho-L-seryl-[protein] + ADP + H(+). The catalysed reaction is L-threonyl-[protein] + ATP = O-phospho-L-threonyl-[protein] + ADP + H(+). With respect to regulation, activated by ABA and Ca(2+). Its function is as follows. Required during abscisic acid (ABA)-mediated activation of Ca(2+) channels. Regulates ABA signaling pathways. Modulates the expression of genes related to cell elongation and ABA signaling during root growth. This Arabidopsis thaliana (Mouse-ear cress) protein is Proline-rich receptor-like protein kinase PERK4 (PERK4).